Consider the following 498-residue polypeptide: Glycerol kinase (498 aa).

ADP is bound at residue Thr11. ATP is bound by residues Thr11, Ser12, and Ser13. Thr11 is a sn-glycerol 3-phosphate binding site. Arg15 provides a ligand contact to ADP. Residues Arg81, Glu82, Tyr133, and Asp242 each contribute to the sn-glycerol 3-phosphate site. The glycerol site is built by Arg81, Glu82, Tyr133, Asp242, and Gln243. The ADP site is built by Thr264 and Gly307. ATP-binding residues include Thr264, Gly307, Gln311, and Gly408. Residues Gly408 and Asn412 each coordinate ADP.

This sequence belongs to the FGGY kinase family.

The enzyme catalyses glycerol + ATP = sn-glycerol 3-phosphate + ADP + H(+). The protein operates within polyol metabolism; glycerol degradation via glycerol kinase pathway; sn-glycerol 3-phosphate from glycerol: step 1/1. With respect to regulation, inhibited by fructose 1,6-bisphosphate (FBP). Its function is as follows. Key enzyme in the regulation of glycerol uptake and metabolism. Catalyzes the phosphorylation of glycerol to yield sn-glycerol 3-phosphate. The chain is Glycerol kinase from Ralstonia pickettii (strain 12J).